The chain runs to 78 residues: Probable cytochrome c oxidase subunit 6B (78 aa).

The CHCH domain occupies 21-64 (TKHCWANYVDYYGCVKHYNGDNSKCQTFFNSMNSLCPAAWISEW). Residues 24–34 (CWANYVDYYGC) carry the Cx9C motif motif. Cystine bridges form between cysteine 24-cysteine 56 and cysteine 34-cysteine 45. The Cx10C motif motif lies at 45–56 (CQTFFNSMNSLC).

The protein belongs to the cytochrome c oxidase subunit 6B family. In terms of assembly, component of the cytochrome c oxidase (complex IV, CIV), a multisubunit enzyme composed of a catalytic core of 3 subunits and several supernumerary subunits. The complex exists as a monomer or a dimer and forms supercomplexes (SCs) in the inner mitochondrial membrane with ubiquinol-cytochrome c oxidoreductase (cytochrome b-c1 complex, complex III, CIII).

The protein localises to the mitochondrion inner membrane. It functions in the pathway energy metabolism; oxidative phosphorylation. In terms of biological role, component of the cytochrome c oxidase, the last enzyme in the mitochondrial electron transport chain which drives oxidative phosphorylation. The respiratory chain contains 3 multisubunit complexes succinate dehydrogenase (complex II, CII), ubiquinol-cytochrome c oxidoreductase (cytochrome b-c1 complex, complex III, CIII) and cytochrome c oxidase (complex IV, CIV), that cooperate to transfer electrons derived from NADH and succinate to molecular oxygen, creating an electrochemical gradient over the inner membrane that drives transmembrane transport and the ATP synthase. Cytochrome c oxidase is the component of the respiratory chain that catalyzes the reduction of oxygen to water. Electrons originating from reduced cytochrome c in the intermembrane space (IMS) are transferred via the dinuclear copper A center (CU(A)) of subunit 2 and heme A of subunit 1 to the active site in subunit 1, a binuclear center (BNC) formed by heme A3 and copper B (CU(B)). The BNC reduces molecular oxygen to 2 water molecules using 4 electrons from cytochrome c in the IMS and 4 protons from the mitochondrial matrix. This chain is Probable cytochrome c oxidase subunit 6B, found in Dictyostelium discoideum (Social amoeba).